The chain runs to 502 residues: Probable malate:quinone oxidoreductase (502 aa).

This sequence belongs to the MQO family. Requires FAD as cofactor.

It catalyses the reaction (S)-malate + a quinone = a quinol + oxaloacetate. It functions in the pathway carbohydrate metabolism; tricarboxylic acid cycle; oxaloacetate from (S)-malate (quinone route): step 1/1. In Synechococcus sp. (strain CC9902), this protein is Probable malate:quinone oxidoreductase.